The primary structure comprises 157 residues: Type II restriction enzyme PvuII (157 aa).

2 residues coordinate Mg(2+): Asp-58 and Glu-68.

As to quaternary structure, homodimer. The cofactor is Mg(2+).

The enzyme catalyses Endonucleolytic cleavage of DNA to give specific double-stranded fragments with terminal 5'-phosphates.. Functionally, a P subtype restriction enzyme that recognizes the double-stranded sequence 5'-CAGCTG-3' and cleaves after G-3. The chain is Type II restriction enzyme PvuII (pvuIIR) from Proteus hauseri.